Here is a 537-residue protein sequence, read N- to C-terminus: Probable E3 ubiquitin-protein ligase ARI3 (537 aa).

A disordered region spans residues 1–30 (MDDDYMMLDDDYGEEEDENYSEDDNYSEAE). A TRIAD supradomain region spans residues 117-331 (KTMKCDVCME…IAGHSCGRYK (215 aa)). Positions 121, 124, 139, 141, 144, 147, 166, 171, 210, 216, 234, 236, 241, 244, 249, 254, 281, and 284 each coordinate Zn(2+). Residues 121–171 (CDVCMEDDLPSNVMTRMECGHRFCNDCWIGHFTVKINEGESKRILCMAHEC) form an RING-type 1 zinc finger. The IBR-type zinc-finger motif lies at 190–254 (DRYDRFLIES…LSESHSPCSC (65 aa)). The RING-type 2; atypical zinc finger occupies 281–309 (CPKCSKPIQKRDGCNLMTCKCGQHFCWLC). Cys294 is a catalytic residue. Residues Cys299, Cys301, Cys306, Cys309, His317, and Cys327 each coordinate Zn(2+).

Belongs to the RBR family. Ariadne subfamily. Zn(2+) is required as a cofactor. In terms of tissue distribution, ubiquitous.

It carries out the reaction [E2 ubiquitin-conjugating enzyme]-S-ubiquitinyl-L-cysteine + [acceptor protein]-L-lysine = [E2 ubiquitin-conjugating enzyme]-L-cysteine + [acceptor protein]-N(6)-ubiquitinyl-L-lysine.. It participates in protein modification; protein ubiquitination. Might act as an E3 ubiquitin-protein ligase, or as part of E3 complex, which accepts ubiquitin from specific E2 ubiquitin-conjugating enzymes and then transfers it to substrates. This chain is Probable E3 ubiquitin-protein ligase ARI3 (ARI3), found in Arabidopsis thaliana (Mouse-ear cress).